Here is a 305-residue protein sequence, read N- to C-terminus: tRNA pseudouridine synthase B (305 aa).

Asp50 (nucleophile) is an active-site residue.

It belongs to the pseudouridine synthase TruB family. Type 1 subfamily.

The catalysed reaction is uridine(55) in tRNA = pseudouridine(55) in tRNA. Responsible for synthesis of pseudouridine from uracil-55 in the psi GC loop of transfer RNAs. This is tRNA pseudouridine synthase B from Rhodococcus jostii (strain RHA1).